The chain runs to 369 residues: Biglycan (369 aa).

The signal sequence occupies residues 1 to 16; it reads MCPLWLLAALLALSQA. Positions 17–37 are excised as a propeptide; it reads LPFEQKAFWDFTLDDGLPMLN. Residues Ser-42 and Ser-48 are each glycosylated (O-linked (Xyl...) (glycosaminoglycan) serine). 2 disulfides stabilise this stretch: Cys-64-Cys-70 and Cys-68-Cys-77. 12 LRR repeats span residues 83 to 103, 104 to 127, 128 to 151, 152 to 172, 173 to 196, 197 to 221, 222 to 242, 243 to 266, 267 to 290, 291 to 313, 314 to 343, and 344 to 369; these read KAVP…NNDI, SELR…NNKI, SKIH…KNHL, VEIP…DNRI, RKVP…GNPL, ENSG…EAKL, TGIP…HNKI, QAIE…HNQI, RMIE…NNKL, SRVP…TNNI, TKVG…NNPV, and PYWE…NYKK. Asn-271 and Asn-312 each carry an N-linked (GlcNAc...) asparagine glycan. A disulfide bond links Cys-322 and Cys-355.

It belongs to the small leucine-rich proteoglycan (SLRP) family. SLRP class I subfamily. In terms of assembly, homodimer. Forms a ternary complex with MFAP2 and ELN. Post-translationally, the two attached glycosaminoglycan chains can be either chondroitin sulfate or dermatan sulfate. In terms of tissue distribution, found in several connective tissues, especially in articular cartilages.

Its subcellular location is the secreted. It is found in the extracellular space. The protein localises to the extracellular matrix. In terms of biological role, may be involved in collagen fiber assembly. The protein is Biglycan (BGN) of Ovis aries (Sheep).